Reading from the N-terminus, the 150-residue chain is 3-hydroxyacyl-[acyl-carrier-protein] dehydratase FabZ (150 aa).

Histidine 51 is a catalytic residue.

It belongs to the thioester dehydratase family. FabZ subfamily.

Its subcellular location is the cytoplasm. The catalysed reaction is a (3R)-hydroxyacyl-[ACP] = a (2E)-enoyl-[ACP] + H2O. Involved in unsaturated fatty acids biosynthesis. Catalyzes the dehydration of short chain beta-hydroxyacyl-ACPs and long chain saturated and unsaturated beta-hydroxyacyl-ACPs. The chain is 3-hydroxyacyl-[acyl-carrier-protein] dehydratase FabZ from Legionella pneumophila (strain Paris).